The chain runs to 86 residues: Large ribosomal subunit protein bL27 (86 aa).

The segment at 1-22 (MATKKAGGSSRNGRDSAGRRLG) is disordered.

This sequence belongs to the bacterial ribosomal protein bL27 family.

This Rickettsia peacockii (strain Rustic) protein is Large ribosomal subunit protein bL27.